Consider the following 475-residue polypeptide: L-ornithine N(5)-monooxygenase (475 aa).

FAD contacts are provided by residues 65 to 73 and Gln-84; that span reads ERQPEFGWH. Residue Lys-89 coordinates substrate. Val-150 lines the FAD pocket. Position 238–241 (238–241) interacts with NADP(+); the sequence is GGQS. Substrate-binding positions include 277–280 and Asn-307; that span reads NEIF. 307-309 provides a ligand contact to NADP(+); that stretch reads NYG. 446–448 is an FAD binding site; sequence SLL. Ser-449 is a binding site for substrate.

Belongs to the lysine N(6)-hydroxylase/L-ornithine N(5)-oxygenase family. Homotetramer. FAD is required as a cofactor.

The catalysed reaction is L-ornithine + NADPH + O2 = N(5)-hydroxy-L-ornithine + NADP(+) + H2O. It carries out the reaction L-ornithine + NADH + O2 = N(5)-hydroxy-L-ornithine + NAD(+) + H2O. It participates in siderophore biosynthesis. Functionally, L-ornithine N(5)-monooxygenase; part of the gene cluster that mediates the biosynthesis of hydroxamate-containing siderophores that play a critical role in virulence via intracellular iron acquisition during macrophage infection. SID1 catalyzes the conversion of L-ornithine to N(5)-hydroxyornithine, the first step in the biosynthesis of all hydroxamate-containing siderophores. In Ajellomyces capsulatus (Darling's disease fungus), this protein is L-ornithine N(5)-monooxygenase.